Reading from the N-terminus, the 634-residue chain is BTB/POZ domain-containing protein At1g03010 (634 aa).

Positions 38 to 103 (SDLTVQVGSS…CYGINIEINL (66 aa)) constitute a BTB domain. An NPH3 domain is found at 205-503 (DWWGKSLAVL…VQVLYFEQIR (299 aa)). At Tyr-444 the chain carries Phosphotyrosine. Residues 542 to 580 (RDNYASVRRENRELKLEVARMRMRLTDLEKDHISIKQEL) adopt a coiled-coil conformation.

Belongs to the NPH3 family.

It functions in the pathway protein modification; protein ubiquitination. In terms of biological role, may act as a substrate-specific adapter of an E3 ubiquitin-protein ligase complex (CUL3-RBX1-BTB) which mediates the ubiquitination and subsequent proteasomal degradation of target proteins. This chain is BTB/POZ domain-containing protein At1g03010, found in Arabidopsis thaliana (Mouse-ear cress).